The primary structure comprises 700 residues: Constitutive coactivator of peroxisome proliferator-activated receptor gamma (700 aa).

This sequence belongs to the constitutive coactivator of PPAR-gamma family. Interacts with ESR1 and RXRA. Interacts with PPARG; in a ligand-independent manner.

The protein localises to the nucleus. Functions as a transactivator of PPARG and ESR1. Functions in adipogenesis through PPARG activation. In Bos taurus (Bovine), this protein is Constitutive coactivator of peroxisome proliferator-activated receptor gamma (FAM120B).